The sequence spans 277 residues: Phosphatidylglycerol--prolipoprotein diacylglyceryl transferase (277 aa).

4 consecutive transmembrane segments (helical) span residues Ile-18–Ala-38, Ile-51–Tyr-71, Ile-89–Ile-109, and Ile-116–Gly-136. Arg-137 lines the a 1,2-diacyl-sn-glycero-3-phospho-(1'-sn-glycerol) pocket. The next 3 helical transmembrane spans lie at Gln-177–Ile-197, Gly-205–Met-225, and Phe-235–Tyr-255.

This sequence belongs to the Lgt family.

It is found in the cell membrane. It carries out the reaction L-cysteinyl-[prolipoprotein] + a 1,2-diacyl-sn-glycero-3-phospho-(1'-sn-glycerol) = an S-1,2-diacyl-sn-glyceryl-L-cysteinyl-[prolipoprotein] + sn-glycerol 1-phosphate + H(+). It participates in protein modification; lipoprotein biosynthesis (diacylglyceryl transfer). Catalyzes the transfer of the diacylglyceryl group from phosphatidylglycerol to the sulfhydryl group of the N-terminal cysteine of a prolipoprotein, the first step in the formation of mature lipoproteins. The chain is Phosphatidylglycerol--prolipoprotein diacylglyceryl transferase from Listeria monocytogenes serovar 1/2a (strain ATCC BAA-679 / EGD-e).